Reading from the N-terminus, the 335-residue chain is Leucine-rich repeat-containing protein 39 (335 aa).

Residues 10–47 are a coiled coil; the sequence is AVNAVKEVWEKRIKKLNEDLKREKEFQHKLVRIWEERV. LRR repeat units lie at residues 84 to 105, 107 to 128, 130 to 151, 153 to 176, 177 to 197, 200 to 221, 223 to 244, 246 to 267, and 269 to 290; these read QLQE…IGRF, NLIV…IGLL, RLQE…LSNC, SLEK…SNLL, KLTH…AVLN, ALEW…IERM, NLHT…ISNM, NLGT…MEEM, and NLRF…PPSE.

In terms of assembly, interacts with MYH7 (via C-terminus). Highly expressed in skeletal muscle and heart. Not detected in other tissues tested.

The protein resides in the cytoplasm. Its subcellular location is the myofibril. It is found in the sarcomere. The protein localises to the m line. Functionally, component of the sarcomeric M-band which plays a role in myocyte response to biomechanical stress. May regulate expression of other M-band proteins via an SRF-dependent pathway. Important for normal contractile function in heart. This Homo sapiens (Human) protein is Leucine-rich repeat-containing protein 39 (LRRC39).